Reading from the N-terminus, the 159-residue chain is Endoribonuclease YbeY (159 aa).

Residues His117, His121, and His127 each contribute to the Zn(2+) site.

The protein belongs to the endoribonuclease YbeY family. The cofactor is Zn(2+).

The protein resides in the cytoplasm. Functionally, single strand-specific metallo-endoribonuclease involved in late-stage 70S ribosome quality control and in maturation of the 3' terminus of the 16S rRNA. In Azorhizobium caulinodans (strain ATCC 43989 / DSM 5975 / JCM 20966 / LMG 6465 / NBRC 14845 / NCIMB 13405 / ORS 571), this protein is Endoribonuclease YbeY.